Consider the following 279-residue polypeptide: Movement protein (279 aa).

The disordered stretch occupies residues 247–279 (ESEELNVESPPAAIGSSSASRSEAFRPQVVNGL). Over residues 254–268 (ESPPAAIGSSSASRS) the composition is skewed to low complexity.

The protein belongs to the cucumovirus movement protein family.

It localises to the host cell junction. It is found in the host plasmodesma. In terms of biological role, transports viral genome to neighboring plant cells directly through plasmosdesmata, without any budding. The movement protein allows efficient cell to cell propagation, by bypassing the host cell wall barrier. Acts by forming a tubular structure at the host plasmodesmata, enlarging it enough to allow free passage of virion capsids. The sequence is that of Movement protein from Cucumis sativus (Cucumber).